Here is a 61-residue protein sequence, read N- to C-terminus: Large ribosomal subunit protein bL32 (61 aa).

Residues 1-44 form a disordered region; it reads MAVQQNRKSRSRRDMRRSHDALTENALTVDQTTGETHRRHHVTK. The segment covering 7–16 has biased composition (basic residues); the sequence is RKSRSRRDMR. Polar residues predominate over residues 25-34; that stretch reads NALTVDQTTG.

It belongs to the bacterial ribosomal protein bL32 family.

The chain is Large ribosomal subunit protein bL32 from Acinetobacter baylyi (strain ATCC 33305 / BD413 / ADP1).